The chain runs to 459 residues: MDLDTITSISTPMGEGAIGIVRLSGPQAVEIADKLYKGKHLLNDVPSHTINYGHIIDPESKEVVEEVMVSVLRAPKTFTREDIIEINCHGGILTINRVLELTMTYGARMAEPGEFTKRAFLNGRIDLSQAEAVMDFIRSKTDRASKVAMNQIEGRLSDLIKKQRQSILEILAQVEVNIDYPEYDDVEDATTEFLLEQSKEIKQEINRLLDTGAQGKIMREGLSTVIVGKPNVGKSSMLNNLIQDNKAIVTEVAGTTRDVLEEYVNVRGVPLRLVDTAGIRETEDIVEKIGVERSRKALSQADLILFVLNNNEALTQEDYTLYEVVKNEDVIVIVNKMDLEQNIDINEVKDMIGDTPLIQTSMLKQEGIDELEIQIRDLFFGGEVQNQDMTYVSNSRHISLLKQARQTIQDAIDAAESGVPMDMVQIDLTRIWEILGEIIGETASDELIDQLFSQFCLGK.

(6S)-5-formyl-5,6,7,8-tetrahydrofolate-binding residues include Arg-22, Glu-85, and Arg-124. The TrmE-type G domain maps to Gly-221–Phe-380. Residue Asn-231 coordinates K(+). GTP contacts are provided by residues Asn-231–Ser-236, Thr-250–Thr-256, and Asp-275–Gly-278. Ser-235 provides a ligand contact to Mg(2+). K(+)-binding residues include Thr-250, Val-252, and Thr-255. Position 256 (Thr-256) interacts with Mg(2+). Lys-459 contributes to the (6S)-5-formyl-5,6,7,8-tetrahydrofolate binding site.

Belongs to the TRAFAC class TrmE-Era-EngA-EngB-Septin-like GTPase superfamily. TrmE GTPase family. As to quaternary structure, homodimer. Heterotetramer of two MnmE and two MnmG subunits. K(+) serves as cofactor.

The protein localises to the cytoplasm. Functionally, exhibits a very high intrinsic GTPase hydrolysis rate. Involved in the addition of a carboxymethylaminomethyl (cmnm) group at the wobble position (U34) of certain tRNAs, forming tRNA-cmnm(5)s(2)U34. The polypeptide is tRNA modification GTPase MnmE (Staphylococcus aureus (strain MSSA476)).